We begin with the raw amino-acid sequence, 82 residues long: Savignygrin (-) (82 aa).

A signal peptide spans 1–21 (MQANIFVFAFLLLSVAVAAYG). 3 disulfide bridges follow: Cys-26–Cys-79, Cys-34–Cys-59, and Cys-53–Cys-75. A Cell attachment site motif is present at residues 35–37 (RGD).

Expressed in salivary glands.

It is found in the cytoplasmic vesicle. The protein localises to the secretory vesicle. The protein resides in the secreted. Its function is as follows. Tick salivary platelet aggregation inhibitor that plays an important part in the anti-hemostatic strategy of ticks. Inhibits platelet aggregation induced by ADP (IC(50)=130 nM), collagen, the thrombin receptor-activating peptide, and epinephrine, although platelets are activated and their shape changed. Binding to platelets is similar for resting and activated platelets (Kd=50-70 nM). Acts by specifically binding to platelet membrane glycoprotein IIb-IIIa (ITGA2B/ITGB3) in a divalent metal ion dependent manner. In contrast to many disintegrins which only interacts with the beta-3 subunit, this protein interacts with the two subunits (alpha-IIb and beta-3). Also causes disaggregation of aggregated platelets without influencing the activated spherical shape associated with aggregated platelets and causes a decrease in the number of pseudopodia on the activated platelet surface. Does not show any inhibitory activity for the different serine proteases tested. This is Savignygrin (-) from Ornithodoros kalahariensis (Tick).